The primary structure comprises 243 residues: tRNA pseudouridine synthase A (243 aa).

Residue Asp53 is the Nucleophile of the active site. Substrate is bound at residue Tyr111.

It belongs to the tRNA pseudouridine synthase TruA family. As to quaternary structure, homodimer.

It catalyses the reaction uridine(38/39/40) in tRNA = pseudouridine(38/39/40) in tRNA. In terms of biological role, formation of pseudouridine at positions 38, 39 and 40 in the anticodon stem and loop of transfer RNAs. This chain is tRNA pseudouridine synthase A, found in Chlorobium limicola (strain DSM 245 / NBRC 103803 / 6330).